We begin with the raw amino-acid sequence, 127 residues long: Probable toxin y4kH (127 aa).

It belongs to the MbcT/ParT/Res family.

In terms of biological role, probable toxic component of a type II toxin-antitoxin (TA) system. It is not known which gene encodes its antitoxin. The chain is Probable toxin y4kH from Sinorhizobium fredii (strain NBRC 101917 / NGR234).